Here is a 124-residue protein sequence, read N- to C-terminus: Protein MGF 110-4L (124 aa).

Positions 1–18 are cleaved as a signal peptide; that stretch reads MLVIFLGILGLLANQVLG. N64 is a glycosylation site (N-linked (GlcNAc...) asparagine; by host). The short motif at 121-124 is the Prevents secretion from ER element; sequence KEDL.

Belongs to the asfivirus MGF 110 family.

It localises to the virion. It is found in the host endoplasmic reticulum-Golgi intermediate compartment. Causes the redistribution of lumenal ER protein to an enlarged ERGIC compartment. The protein is Protein MGF 110-4L of Ornithodoros (relapsing fever ticks).